Consider the following 196-residue polypeptide: MSSKEQKTPEGQAPEEIIMDQHEEVEAVEPNDSAEQVDPRDEKIANLEVQLAEAQTRERDTVLRIKAEMENLRRRTEQDIEKAHKFALEKFVNELLPVIDSLDRALEVADKANPDMAAMVEGIELTLKSMLDVVRKFGVEVIAETNVPMDPNVHQAIAMVESEEVPAGNVLGIMQKGYTLNGRTIRAAMVTVAKAK.

The interval 1–40 (MSSKEQKTPEGQAPEEIIMDQHEEVEAVEPNDSAEQVDPR) is disordered.

The protein belongs to the GrpE family. As to quaternary structure, homodimer.

Its subcellular location is the cytoplasm. Participates actively in the response to hyperosmotic and heat shock by preventing the aggregation of stress-denatured proteins, in association with DnaK and GrpE. It is the nucleotide exchange factor for DnaK and may function as a thermosensor. Unfolded proteins bind initially to DnaJ; upon interaction with the DnaJ-bound protein, DnaK hydrolyzes its bound ATP, resulting in the formation of a stable complex. GrpE releases ADP from DnaK; ATP binding to DnaK triggers the release of the substrate protein, thus completing the reaction cycle. Several rounds of ATP-dependent interactions between DnaJ, DnaK and GrpE are required for fully efficient folding. In Salmonella gallinarum (strain 287/91 / NCTC 13346), this protein is Protein GrpE.